Here is a 115-residue protein sequence, read N- to C-terminus: NADH-ubiquinone oxidoreductase chain 3 (115 aa).

3 helical membrane-spanning segments follow: residues 3–23 (LMLVLLINTTISLVLVTIAFW), 55–75 (FFLVAITFLLFDLEIALLLPL), and 87–107 (VLIMALMLISILALGLAYEWI).

Belongs to the complex I subunit 3 family. As to quaternary structure, core subunit of respiratory chain NADH dehydrogenase (Complex I) which is composed of 45 different subunits. Interacts with TMEM186. Interacts with TMEM242.

Its subcellular location is the mitochondrion inner membrane. It carries out the reaction a ubiquinone + NADH + 5 H(+)(in) = a ubiquinol + NAD(+) + 4 H(+)(out). In terms of biological role, core subunit of the mitochondrial membrane respiratory chain NADH dehydrogenase (Complex I) which catalyzes electron transfer from NADH through the respiratory chain, using ubiquinone as an electron acceptor. Essential for the catalytic activity of complex I. This Oryctolagus cuniculus (Rabbit) protein is NADH-ubiquinone oxidoreductase chain 3.